Reading from the N-terminus, the 220-residue chain is MGQKVNPVGLRVGVIRDWDSKWYAGKKDYADLLHEDIAIREHVEGRLKDASVSKVEIERAANRVNITISTAKPGMVIGKGGSEVEALRKSLNELTGKRVHINISEIKQADLDAKLVAENIARQLENRISFRRAMKQAIQRTMRAGAKGIKTQVSGRLGGADIARAEHYSEGTVPLHTLRADIDYGTAEADTTYGKIGVKIWVYRGEVLPTKGTNKEEGGN.

The 69-residue stretch at 39–107 folds into the KH type-2 domain; the sequence is IREHVEGRLK…RVHINISEIK (69 aa).

The protein belongs to the universal ribosomal protein uS3 family. In terms of assembly, part of the 30S ribosomal subunit. Forms a tight complex with proteins S10 and S14.

Binds the lower part of the 30S subunit head. Binds mRNA in the 70S ribosome, positioning it for translation. This chain is Small ribosomal subunit protein uS3, found in Shouchella clausii (strain KSM-K16) (Alkalihalobacillus clausii).